The chain runs to 386 residues: S-adenosylmethionine synthase (386 aa).

Residue His-16 participates in ATP binding. Asp-18 is a Mg(2+) binding site. K(+) is bound at residue Glu-44. Positions 57 and 100 each coordinate L-methionine. The flexible loop stretch occupies residues 100–110; sequence QSRDITQGVDR. ATP is bound by residues 165–167, Asp-240, 246–247, Ala-263, and Lys-267; these read DAK and RK. L-methionine is bound at residue Asp-240. Residue Lys-271 coordinates L-methionine.

The protein belongs to the AdoMet synthase family. Homotetramer; dimer of dimers. It depends on Mg(2+) as a cofactor. Requires K(+) as cofactor.

Its subcellular location is the cytoplasm. It carries out the reaction L-methionine + ATP + H2O = S-adenosyl-L-methionine + phosphate + diphosphate. Its pathway is amino-acid biosynthesis; S-adenosyl-L-methionine biosynthesis; S-adenosyl-L-methionine from L-methionine: step 1/1. Functionally, catalyzes the formation of S-adenosylmethionine (AdoMet) from methionine and ATP. The overall synthetic reaction is composed of two sequential steps, AdoMet formation and the subsequent tripolyphosphate hydrolysis which occurs prior to release of AdoMet from the enzyme. This Francisella tularensis subsp. tularensis (strain FSC 198) protein is S-adenosylmethionine synthase.